A 342-amino-acid chain; its full sequence is Anthranilate phosphoribosyltransferase (342 aa).

5-phospho-alpha-D-ribose 1-diphosphate is bound by residues glycine 74, 77-78 (GD), threonine 82, 84-87 (NVST), 101-109 (KHGNRSVSG), and serine 113. Glycine 74 is an anthranilate binding site. Serine 86 is a Mg(2+) binding site. Position 104 (asparagine 104) interacts with anthranilate. Residue arginine 159 coordinates anthranilate. Mg(2+) is bound by residues aspartate 218 and glutamate 219.

Belongs to the anthranilate phosphoribosyltransferase family. Homodimer. Mg(2+) is required as a cofactor.

It catalyses the reaction N-(5-phospho-beta-D-ribosyl)anthranilate + diphosphate = 5-phospho-alpha-D-ribose 1-diphosphate + anthranilate. It functions in the pathway amino-acid biosynthesis; L-tryptophan biosynthesis; L-tryptophan from chorismate: step 2/5. In terms of biological role, catalyzes the transfer of the phosphoribosyl group of 5-phosphorylribose-1-pyrophosphate (PRPP) to anthranilate to yield N-(5'-phosphoribosyl)-anthranilate (PRA). The sequence is that of Anthranilate phosphoribosyltransferase from Sulfolobus acidocaldarius (strain ATCC 33909 / DSM 639 / JCM 8929 / NBRC 15157 / NCIMB 11770).